The sequence spans 1355 residues: Transcription factor MAR1 (1355 aa).

The segment at residues 23–52 is a DNA-binding region (zn(2)-C6 fungal-type); it reads CTICRKRKVKCDKTRPHCNQCTKTGVAHLC. 3 disordered regions span residues 586–614, 918–942, and 1221–1253; these read TTDN…KDTN, SVPS…LNQD, and PPIS…TSSL. Residues 589-603 are compositionally biased toward low complexity; it reads NTRSGPPSNSNRNGS. The span at 604-614 shows a compositional bias: polar residues; that stretch reads ETPSVSPKDTN. A compositionally biased stretch (low complexity) spans 918-927; sequence SVPSSCNSSS. Residues 1225 to 1238 are compositionally biased toward polar residues; it reads SAKNNMAWGTTPES.

The protein localises to the nucleus. Functionally, transcription factor that contributes to plasma membrane sphingolipid incorporation and membrane permeability, decreasing fluconazole accumulation. Regulates 337 genes under fluconazole stress, including several related to lipid biosynthesis pathways such as RSB1, encoding a sphingoid long-chain base efflux transporter. Associates with the promoter of RSB1 in the region containing two 5'-CCCCTCC-3' motifs and increases its promoter occupancy upon fluconazole stress. This chain is Transcription factor MAR1, found in Candida glabrata (strain ATCC 2001 / BCRC 20586 / JCM 3761 / NBRC 0622 / NRRL Y-65 / CBS 138) (Yeast).